Here is a 302-residue protein sequence, read N- to C-terminus: tRNA-cytidine(32) 2-sulfurtransferase (302 aa).

Positions 45–50 (SGGKDS) match the PP-loop motif motif. Residues Cys-120, Cys-123, and Cys-211 each coordinate [4Fe-4S] cluster.

Belongs to the TtcA family. In terms of assembly, homodimer. Mg(2+) serves as cofactor. It depends on [4Fe-4S] cluster as a cofactor.

It localises to the cytoplasm. The enzyme catalyses cytidine(32) in tRNA + S-sulfanyl-L-cysteinyl-[cysteine desulfurase] + AH2 + ATP = 2-thiocytidine(32) in tRNA + L-cysteinyl-[cysteine desulfurase] + A + AMP + diphosphate + H(+). It participates in tRNA modification. Catalyzes the ATP-dependent 2-thiolation of cytidine in position 32 of tRNA, to form 2-thiocytidine (s(2)C32). The sulfur atoms are provided by the cysteine/cysteine desulfurase (IscS) system. The protein is tRNA-cytidine(32) 2-sulfurtransferase of Aeromonas salmonicida (strain A449).